Here is a 238-residue protein sequence, read N- to C-terminus: Cysteine-rich venom protein 1 (238 aa).

An N-terminal signal peptide occupies residues 1–19 (MIAFIVLLSLAAVLQQSSG). An SCP domain is found at 38 to 164 (VDKHNALRRS…STKYLYVCQY (127 aa)). 8 disulfides stabilise this stretch: Cys75-Cys153, Cys92-Cys165, Cys148-Cys162, Cys184-Cys191, Cys187-Cys196, Cys200-Cys233, Cys209-Cys227, and Cys218-Cys231. A ShKT domain is found at 200–233 (CEYEDTFSNCKALAKKTKCKTEWIKSKCPATCFC).

Belongs to the CRISP family. In terms of tissue distribution, expressed by the venom gland.

It is found in the secreted. Blocks contraction of smooth muscle elicited by high potassium-induced depolarization, but does not block caffeine-stimulated contraction. May target voltage-gated calcium channels on smooth muscle. The protein is Cysteine-rich venom protein 1 of Hydrophis hardwickii (Hardwick's spine-bellied seasnake).